A 515-amino-acid polypeptide reads, in one-letter code: MEAVISFDFQNCFIFILIFLLTFLCFFFFFKKPKDSRVNFDLPPSPPSLPIIGHVHLLLSTLTHKSLQKLSSRYGPLLYLRIFNVPIILVSSASVAYEIFRTQDVNISSRGVTAVDESLVFGSSSFVTAPYGDYWKFMKKLTVMKLLGPQAQEQSRDIRADDIKRFCRNLLDKARKKESVEIGKEAMNLMNNILCKMSMGRSFSEENGETEKLRGLVTESIGLMKKMFLAVLLRRQLQKLGISLFKKDIMGVSNKFDVLLEKVLVEHREKPEKDQGTVMLDVLLAAYGDENAEYKITKNHIKAFFVDLFIGATDTSVQTIQWTMAEIMNNTHILERMREEIDSVVGKSRLIQETDLPNLPYLHAVIKEALRLHPPGPLLPREFQQGCKIGGFYIPEKTTLLINAYVVMRDPNVWEDPEEFKPERFLASSRSGQEDERREQALKFLPFGSGRRGCPGSNLAYMIVGSAIGMMVQCFDWRIEGEKVNMKEAVKGTILTMAHPLKLTPVTRQPPLTWI.

A helical transmembrane segment spans residues phenylalanine 9 to phenylalanine 29. Residue cysteine 454 participates in heme binding.

It belongs to the cytochrome P450 family. Heme is required as a cofactor.

The protein localises to the membrane. Its function is as follows. Plays a role in the gravitropic response of the inflorescence stems and roots. May affect the synthesis of flavonols that have a role in regulating auxin transport. The protein is Cytochrome P450 705A22 of Arabidopsis thaliana (Mouse-ear cress).